The chain runs to 551 residues: MNNTVINSIIGNDDIVKRHNVFGVDVQNPTLYMPQYITINGITSTDSNCDQHVVSTFEIRDQYITALSHVMLSIELPEVKGVGRFGYVPYVGYLCIQHVSISSYDDILWESSGEDLYNSCLDNDTALTNSGYSHELNTISTGLTPNDTIKESTTVYVYIKTPFDVEKTFSSLKLADTKIVITVTFNPVSDIIIRDITFNYDNFVKDFVYVTELSCIGYMVKNIQIKPSYIERPRRVFGQLNQSTAVISDVHSVSSLSVYIKPYYGNADNKFISYPGYSQSEKDYICVFVERLLDDLVTVCDTSPKWFPETAELVEVPNSGIVTIQDVDIFVRIDNVPCNMKVYFHTNILVFGTRKNSVTYNLSKKFTTITGTYSESTNRIMFSHVSHSINITDVSIPVSVWTCQRNIYNGDNRSESSKNKDLFINDPFIKGIDFKNKTDIISRLEVRFGNDVLYSETSPISKVYNDLLSNHKCGMRTLRFNFTPPTFFKPTTIVANPSRGKDKLSVRVVFTSLDPNNPIYYISKQLVLVCKDLYKVTNDDGINVTKIIGEL.

It belongs to the poxviridae protein D13 family. Homotrimer. Self-assembles to form a layer. Interacts with A17 (via N-terminus); this interaction is necessary for D13 association with membranes.

Its subcellular location is the membrane. Its function is as follows. Scaffold protein which forms a transitory spherical honeycomb lattice providing curvature and rigidity to the convex membrane of crescent and immature virions (IV). This association occurs concomitantly with viral membrane formation. Targeted by the drug rifampicin, which prevents the formation of this lattice, and hence virus morphogenesis. In the presence of rifampicin, irregularly shaped membranes that lack the honeycomb layer accumulate around areas of electron-dense viroplasm. This layer is lost from virions during maturation from IV to mature virion (MV), through the proteolysis of A17 N-terminus. The protein is Scaffold protein D13 ortholog of Sus scrofa (Pig).